Reading from the N-terminus, the 72-residue chain is uncharacterized protein (72 aa).

Positions 1-38 (MSIFSSLSSLSTGSLKSSVSSIENGSSSGSFGSNETSG) are enriched in low complexity. The disordered stretch occupies residues 1–42 (MSIFSSLSSLSTGSLKSSVSSIENGSSSGSFGSNETSGWGQH).

This is an uncharacterized protein from Dictyostelium discoideum (Social amoeba).